Consider the following 484-residue polypeptide: Bifunctional protein GlmU (484 aa).

Positions Met1–Arg240 are pyrophosphorylase. UDP-N-acetyl-alpha-D-glucosamine-binding positions include Leu12–Gly15, Lys26, Gln83, and Gly88–Thr89. Asp113 is a Mg(2+) binding site. The UDP-N-acetyl-alpha-D-glucosamine site is built by Gly150, Glu165, Asn180, and Asn238. Asn238 is a Mg(2+) binding site. Positions Val241–Asn261 are linker. The interval Gly262–Gly484 is N-acetyltransferase. UDP-N-acetyl-alpha-D-glucosamine contacts are provided by Arg343 and Lys361. The active-site Proton acceptor is His373. Tyr376 and Asn387 together coordinate UDP-N-acetyl-alpha-D-glucosamine. Acetyl-CoA-binding positions include Ala390, Asn396–Tyr397, Ser415, and Ala433. Residues Glu461–Gly484 form a disordered region.

It in the N-terminal section; belongs to the N-acetylglucosamine-1-phosphate uridyltransferase family. This sequence in the C-terminal section; belongs to the transferase hexapeptide repeat family. In terms of assembly, homotrimer. The cofactor is Mg(2+).

Its subcellular location is the cytoplasm. The catalysed reaction is alpha-D-glucosamine 1-phosphate + acetyl-CoA = N-acetyl-alpha-D-glucosamine 1-phosphate + CoA + H(+). It catalyses the reaction N-acetyl-alpha-D-glucosamine 1-phosphate + UTP + H(+) = UDP-N-acetyl-alpha-D-glucosamine + diphosphate. It functions in the pathway nucleotide-sugar biosynthesis; UDP-N-acetyl-alpha-D-glucosamine biosynthesis; N-acetyl-alpha-D-glucosamine 1-phosphate from alpha-D-glucosamine 6-phosphate (route II): step 2/2. Its pathway is nucleotide-sugar biosynthesis; UDP-N-acetyl-alpha-D-glucosamine biosynthesis; UDP-N-acetyl-alpha-D-glucosamine from N-acetyl-alpha-D-glucosamine 1-phosphate: step 1/1. It participates in bacterial outer membrane biogenesis; LPS lipid A biosynthesis. Catalyzes the last two sequential reactions in the de novo biosynthetic pathway for UDP-N-acetylglucosamine (UDP-GlcNAc). The C-terminal domain catalyzes the transfer of acetyl group from acetyl coenzyme A to glucosamine-1-phosphate (GlcN-1-P) to produce N-acetylglucosamine-1-phosphate (GlcNAc-1-P), which is converted into UDP-GlcNAc by the transfer of uridine 5-monophosphate (from uridine 5-triphosphate), a reaction catalyzed by the N-terminal domain. The polypeptide is Bifunctional protein GlmU (Corynebacterium diphtheriae (strain ATCC 700971 / NCTC 13129 / Biotype gravis)).